The chain runs to 972 residues: FHF complex subunit HOOK-interacting protein 1B (972 aa).

4 disordered regions span residues 465–496 (APSP…VPRP), 510–547 (SLSG…AGEL), 573–642 (SAPY…PGSW), and 710–733 (SFTC…NQLP). S467 is subject to Phosphoserine. Positions 479 to 490 (GPGSPSVDSSSV) are enriched in low complexity. Phosphoserine is present on residues S510, S523, S529, and S533. Low complexity predominate over residues 523–535 (SPGLSASPASSPG). Over residues 618–627 (GLAGGAGEGP) the composition is skewed to gly residues. Phosphoserine is present on residues S859 and S897.

Belongs to the FHIP family. Component of the FTS/Hook/FHIP complex (FHF complex), composed of AKTIP/FTS, FHIP1B, and one or more members of the Hook family of proteins HOOK1, HOOK2, and HOOK3. The FHF complex associates with the homotypic vesicular sorting complex (the HOPS complex).

Its function is as follows. Component of the FTS/Hook/FHIP complex (FHF complex). The FHF complex may function to promote vesicle trafficking and/or fusion via the homotypic vesicular protein sorting complex (the HOPS complex). FHF complex promotes the distribution of AP-4 complex to the perinuclear area of the cell. This is FHF complex subunit HOOK-interacting protein 1B (FHIP1B) from Pongo abelii (Sumatran orangutan).